The following is a 700-amino-acid chain: Elongation factor G 1 (700 aa).

The 283-residue stretch at 8-290 (ERYRNIGISA…AVIDYLPSPA (283 aa)) folds into the tr-type G domain. GTP contacts are provided by residues 17-24 (AHIDAGKT), 88-92 (DTPGH), and 142-145 (NKMD).

It belongs to the TRAFAC class translation factor GTPase superfamily. Classic translation factor GTPase family. EF-G/EF-2 subfamily.

Its subcellular location is the cytoplasm. Its function is as follows. Catalyzes the GTP-dependent ribosomal translocation step during translation elongation. During this step, the ribosome changes from the pre-translocational (PRE) to the post-translocational (POST) state as the newly formed A-site-bound peptidyl-tRNA and P-site-bound deacylated tRNA move to the P and E sites, respectively. Catalyzes the coordinated movement of the two tRNA molecules, the mRNA and conformational changes in the ribosome. The polypeptide is Elongation factor G 1 (Bordetella parapertussis (strain 12822 / ATCC BAA-587 / NCTC 13253)).